The chain runs to 65 residues: Small ribosomal subunit protein bS21 (65 aa).

Over residues 33–42 (RRREHYEKPS) the composition is skewed to basic and acidic residues. A disordered region spans residues 33–65 (RRREHYEKPSVKRKRKEAARLRKLQKMAREANN). Residues 43 to 58 (VKRKRKEAARLRKLQK) show a composition bias toward basic residues.

Belongs to the bacterial ribosomal protein bS21 family.

In Herpetosiphon aurantiacus (strain ATCC 23779 / DSM 785 / 114-95), this protein is Small ribosomal subunit protein bS21.